Consider the following 215-residue polypeptide: Ribosomal RNA small subunit methyltransferase G (215 aa).

S-adenosyl-L-methionine contacts are provided by residues Gly-77, Phe-82, 130–131, and Arg-146; that span reads IE.

The protein belongs to the methyltransferase superfamily. RNA methyltransferase RsmG family.

The protein resides in the cytoplasm. The enzyme catalyses guanosine(527) in 16S rRNA + S-adenosyl-L-methionine = N(7)-methylguanosine(527) in 16S rRNA + S-adenosyl-L-homocysteine. Specifically methylates the N7 position of guanine in position 527 of 16S rRNA. The polypeptide is Ribosomal RNA small subunit methyltransferase G (Bartonella quintana (strain Toulouse) (Rochalimaea quintana)).